Reading from the N-terminus, the 472-residue chain is Ribulose bisphosphate carboxylase large chain 1 (472 aa).

Substrate-binding residues include N115 and T165. The Proton acceptor role is filled by K167. K169 contributes to the substrate binding site. Positions 193, 195, and 196 each coordinate Mg(2+). Position 193 is an N6-carboxylysine (K193). The active-site Proton acceptor is the H286. The substrate site is built by R287, H319, and S371.

Belongs to the RuBisCO large chain family. Type I subfamily. In terms of assembly, heterohexadecamer of 8 large chains and 8 small chains. Mg(2+) serves as cofactor.

The enzyme catalyses 2 (2R)-3-phosphoglycerate + 2 H(+) = D-ribulose 1,5-bisphosphate + CO2 + H2O. It catalyses the reaction D-ribulose 1,5-bisphosphate + O2 = 2-phosphoglycolate + (2R)-3-phosphoglycerate + 2 H(+). Functionally, ruBisCO catalyzes two reactions: the carboxylation of D-ribulose 1,5-bisphosphate, the primary event in carbon dioxide fixation, as well as the oxidative fragmentation of the pentose substrate. Both reactions occur simultaneously and in competition at the same active site. In Rhodopseudomonas palustris (strain BisB5), this protein is Ribulose bisphosphate carboxylase large chain 1.